The primary structure comprises 623 residues: Glutathione import ATP-binding protein GsiA (623 aa).

2 consecutive ABC transporter domains span residues 15-269 (VENL…RALL) and 314-564 (LRVR…RKLL). Residues 49–56 (GESGSGKS) and 357–364 (GESGSGKS) contribute to the ATP site.

The protein belongs to the ABC transporter superfamily. Glutathione importer (TC 3.A.1.5.11) family. In terms of assembly, the complex is composed of two ATP-binding proteins (GsiA), two transmembrane proteins (GsiC and GsiD) and a solute-binding protein (GsiB).

It is found in the cell inner membrane. The catalysed reaction is glutathione(out) + ATP + H2O = glutathione(in) + ADP + phosphate + H(+). In terms of biological role, part of the ABC transporter complex GsiABCD involved in glutathione import. Responsible for energy coupling to the transport system. The chain is Glutathione import ATP-binding protein GsiA from Shigella sonnei (strain Ss046).